Reading from the N-terminus, the 204-residue chain is MGAYKYMQELWRKKQSDVMRFLLRVRCWQYRQLSSLHRAPRPTRPDKARRLGYKAKQGYVIYRIRVRRGGRKRPVPKGATYGKPVHHGVNQIKFARSLQSVAEERAGRHCGGLRVLNSYWVGEDSTYKFFEVILIDTFHKAIRRNPDTQWITKAVHKHREMRGLTSAGKKSRGLGKGHKFHLTIGGSRRAAWKRRDTLQLHRYR.

The protein belongs to the eukaryotic ribosomal protein eL15 family. As to quaternary structure, component of the large ribosomal subunit.

Its subcellular location is the cytoplasm. Component of the large ribosomal subunit. The ribosome is a large ribonucleoprotein complex responsible for the synthesis of proteins in the cell. This Mylopharyngodon piceus (Black carp) protein is Large ribosomal subunit protein eL15 (rpl15).